The following is a 258-amino-acid chain: Regulatory protein RecX (258 aa).

The protein belongs to the RecX family.

Its subcellular location is the cytoplasm. In terms of biological role, modulates RecA activity. This chain is Regulatory protein RecX, found in Streptococcus pneumoniae serotype 19F (strain G54).